Here is a 424-residue protein sequence, read N- to C-terminus: UDP-N-acetylglucosamine 1-carboxyvinyltransferase (424 aa).

Position 22–23 (22–23 (KN)) interacts with phosphoenolpyruvate. Arg-93 serves as a coordination point for UDP-N-acetyl-alpha-D-glucosamine. The active-site Proton donor is Cys-117. Cys-117 carries the 2-(S-cysteinyl)pyruvic acid O-phosphothioketal modification. UDP-N-acetyl-alpha-D-glucosamine-binding positions include 122 to 126 (RPIDL), Asp-307, and Val-329.

It belongs to the EPSP synthase family. MurA subfamily.

It is found in the cytoplasm. The catalysed reaction is phosphoenolpyruvate + UDP-N-acetyl-alpha-D-glucosamine = UDP-N-acetyl-3-O-(1-carboxyvinyl)-alpha-D-glucosamine + phosphate. It participates in cell wall biogenesis; peptidoglycan biosynthesis. In terms of biological role, cell wall formation. Adds enolpyruvyl to UDP-N-acetylglucosamine. The sequence is that of UDP-N-acetylglucosamine 1-carboxyvinyltransferase from Chlorobium luteolum (strain DSM 273 / BCRC 81028 / 2530) (Pelodictyon luteolum).